A 306-amino-acid chain; its full sequence is Homoserine kinase (306 aa).

84–94 (PAGLGLGSSGA) is an ATP binding site.

It belongs to the GHMP kinase family. Homoserine kinase subfamily.

Its subcellular location is the cytoplasm. The catalysed reaction is L-homoserine + ATP = O-phospho-L-homoserine + ADP + H(+). It participates in amino-acid biosynthesis; L-threonine biosynthesis; L-threonine from L-aspartate: step 4/5. Its function is as follows. Catalyzes the ATP-dependent phosphorylation of L-homoserine to L-homoserine phosphate. The sequence is that of Homoserine kinase from Sulfurisphaera tokodaii (strain DSM 16993 / JCM 10545 / NBRC 100140 / 7) (Sulfolobus tokodaii).